The primary structure comprises 515 residues: 2,3-bisphosphoglycerate-independent phosphoglycerate mutase (515 aa).

Mn(2+) contacts are provided by Asp-14 and Ser-63. Ser-63 is a catalytic residue. Substrate-binding positions include His-124, 154-155, Arg-186, Arg-192, 259-262, and Lys-334; these read RD and RADR. 5 residues coordinate Mn(2+): Asp-401, His-405, Asp-442, His-443, and His-460.

Belongs to the BPG-independent phosphoglycerate mutase family. The cofactor is Mg(2+). Requires Mn(2+) as cofactor.

The enzyme catalyses (2R)-2-phosphoglycerate = (2R)-3-phosphoglycerate. It functions in the pathway carbohydrate degradation; glycolysis; pyruvate from D-glyceraldehyde 3-phosphate: step 3/5. With respect to regulation, activity is not affected by 2,3-bisphosphoglycerate. Catalyzes the interconversion of 2-phosphoglycerate and 3-phosphoglycerate. This is 2,3-bisphosphoglycerate-independent phosphoglycerate mutase from Brugia malayi (Filarial nematode worm).